The chain runs to 404 residues: S-adenosylmethionine synthase (404 aa).

Residues 1 to 13 (MSQSRYFFTSESV) show a composition bias toward polar residues. Residues 1–20 (MSQSRYFFTSESVSEGHPDK) are disordered. His-17 provides a ligand contact to ATP. Mg(2+) is bound at residue Asp-19. Position 45 (Glu-45) interacts with K(+). L-methionine-binding residues include Glu-58 and Gln-101. Positions 101–111 (QSPDINRGVDR) are flexible loop. Residues 172 to 174 (DAK), 245 to 246 (RF), Asp-254, 260 to 261 (RK), Ala-277, and Lys-281 each bind ATP. Residue Asp-254 coordinates L-methionine. Lys-285 lines the L-methionine pocket.

It belongs to the AdoMet synthase family. As to quaternary structure, homotetramer; dimer of dimers. Requires Mg(2+) as cofactor. K(+) is required as a cofactor.

It localises to the cytoplasm. It carries out the reaction L-methionine + ATP + H2O = S-adenosyl-L-methionine + phosphate + diphosphate. Its pathway is amino-acid biosynthesis; S-adenosyl-L-methionine biosynthesis; S-adenosyl-L-methionine from L-methionine: step 1/1. In terms of biological role, catalyzes the formation of S-adenosylmethionine (AdoMet) from methionine and ATP. The overall synthetic reaction is composed of two sequential steps, AdoMet formation and the subsequent tripolyphosphate hydrolysis which occurs prior to release of AdoMet from the enzyme. The polypeptide is S-adenosylmethionine synthase (Chlorobium limicola (strain DSM 245 / NBRC 103803 / 6330)).